Reading from the N-terminus, the 131-residue chain is Glycine cleavage system H protein (131 aa).

A Lipoyl-binding domain is found at 24 to 106; it reads RVTVGISDHA…YGEGWIFVVE (83 aa). K65 is modified (N6-lipoyllysine).

This sequence belongs to the GcvH family. As to quaternary structure, the glycine cleavage system is composed of four proteins: P, T, L and H. (R)-lipoate serves as cofactor.

Functionally, the glycine cleavage system catalyzes the degradation of glycine. The H protein shuttles the methylamine group of glycine from the P protein to the T protein. The chain is Glycine cleavage system H protein from Xanthomonas euvesicatoria pv. vesicatoria (strain 85-10) (Xanthomonas campestris pv. vesicatoria).